The primary structure comprises 113 residues: U11-theraphotoxin-Hhn1a (113 aa).

A signal peptide spans 1–21; that stretch reads MNTVRVTFLLVFVLAVSLGQA. Positions 22–74 are excised as a propeptide; that stretch reads DKDENRMEMQEKTEQGNSYLDFAENLPLQKLEELEAKLLEEDSEESRNSRQKR. Residues 60–69 show a composition bias toward basic and acidic residues; the sequence is LEEDSEESRN. A disordered region spans residues 60–83; that stretch reads LEEDSEESRNSRQKRCIGEGVPCD. 3 cysteine pairs are disulfide-bonded: Cys-75-Cys-90, Cys-82-Cys-95, and Cys-89-Cys-110.

The protein belongs to the neurotoxin 14 (magi-1) family. 01 (HNTX-16) subfamily. Expressed by the venom gland.

It is found in the secreted. Functionally, probable ion channel inhibitor. This is U11-theraphotoxin-Hhn1a from Cyriopagopus hainanus (Chinese bird spider).